A 560-amino-acid polypeptide reads, in one-letter code: Alpha-farnesene synthase (560 aa).

Mg(2+) is bound by residues D308, D312, and E462. A DDXXD motif motif is present at residues 308–312; that stretch reads DDIYD.

It belongs to the terpene synthase family. Tpsa subfamily. Mg(2+) serves as cofactor. In terms of tissue distribution, expressed in the rind tissues of ripe fruits.

The protein resides in the cytoplasm. It carries out the reaction (2E,6E)-farnesyl diphosphate = (3E,6E)-alpha-farnesene + diphosphate. It participates in secondary metabolite biosynthesis; terpenoid biosynthesis. Its function is as follows. Sesquiterpene synthase producing exclusively alpha-farnesene. Associated with the production of sesquiterpenes responsible for the aroma of the fruit. The polypeptide is Alpha-farnesene synthase (Cucumis melo (Muskmelon)).